The sequence spans 1969 residues: MAARSAPSCHLRLEWVYGYRGHQCRNNLYYTAAKEIVYFVAGVGVVYSPREHRQKFYRGHSDDIISLALHPERVLVATGQVGKEPYICIWDSYTVQTISVLKDVHTHGIACLAFDLDGQRLVSVGLDSKNAVCVWDWKRGKMLSMAPGHTDRIFDISWDLYQPNKLVSCGVKHIKFWSLCGNALTPKRGVFGKTGDLQTILCLACARDELTYSGALNGDIYVWKGINLIRTIQGAHAAGIFSMNACEEGFATGGRDGCIRLWDLTFKPITVIDLRETDQGYKGLSVRSVCWRGDHILVGTQDSEIFEIVVQERNKPFLIMQGHCEGELWALAVHPTKPLAVTGSDDRSVRIWSLVDHALIARCNMEEPIRCAAVNADGIHLALGMKDGSFTVLRVRDMTEVVHIKDRKEAIHELKYSPDGTYLAVGCNDSSVDIYGVAQRYKKVGECLGSLSFITHLDWSSDSRYLQTNDGNGKRLFYRMPGGKEVTSTEEIKGVHWASWTCVSGLEVNGIWPKYSDINDINSVDGNYIGQVLVTADDYGIIKLFRYPCLRKGAKFRKYIGHSAHVTNVRWSHDYQWVISIGGADHSVFQWKFIPERKLKDAVHIAPQESLADSHSDESDSDLSDVPELDSEIEQETQLTYRRQVYKEDLPQLKEQCKEKQKSATSKRRERAPGNSIRLHFVHGYRGYDCRSNLFYTQIGEIVYHVAAVGVIYNRQQNTQRFYLGHDDDILCLTIHPLKDYVATGQVGRDPSIHIWDTETIKPLSILKGHHQYGVSAVDFSADGKRLASVGIDDSHTVVLWDWKKGEKLSIARGSKDKIFVVKMNPYVPDKLITAGIKHMKFWRKAGGGLIGRKGYIGTLGKNDTMMCAVYGWTEEMAFSGTSTGDVCIWRDIFLVKTVKAHDGPVFSMHALEKGFVTGGKDGIVALWDDSFERCLKTYAIKRAALAPGSKGLLLEDNPSIRAISLGHGHILVGTKNGEILEVDKSGPITLLVQGHMEGEVWGLATHPYLPICATVSDDKTLRIWDLSPSHCMLAVRKLKKGGRCCCFSPDGKALAVGLNDGSFLMANADTLEDLVSFHHRKDMISDIRFSPGSGKYLAVASHDSFIDIYNVMSSKRVGICKGATSYITHIDWDIRGKLLQVNTGAKEQLFFEAPRGKKQTIPSVEVEKIAWASWTSVLGLCCEGIWPVIGEVTDVTASCLTSDKMVLATGDDLGFVKLFRYPTKGKFGKFKRYVAHSTHVTNVRWTYDDSMLVTLGGTDMSLMVWTNEMEGYREKRPCDSEESDIDSEEDGGYDSDVTRENEISYTIRALSTNIRPMLGIKPHLQQKEPSIDERPPVSRAPPQPEKLQTNNVGKKKRPIEDLVLELIFGYRGRDCRNNVHYLNDGDDIIYHTASVGILHNVATGSQSFYQEHNDDILCLTVNQHPKFINIVATGQVGDSADMSATAPSIHIWDAMNKQTLSILRCYHSKGVCSVSFSATGKLLLSVGLDPEHTITIWRWQEGAKIASRAGHNQRIFVAEFRPDSDTQFVSVGVKHVKFWTLAGRALLSKKGLLSTLEDARMQTMLAIAFGANNLTFTGTISGDVCVWKDHILCRIVARAHNGPVFAMYTTLRDGLIVTGGKERPSKEGGAVKLWDQELRRCRAFRLETGQATDCVRSVCRGKGKILVGTRNAEIIEVGEKNAACNILVNGHVDGPIWGLATHPSRDFFLSAAEDGTVRLWDIADKKMLNKVNLGHAARTVCYSPEGDMVAIGMKNGEFIILLVSSLKIWGKKRDRRCAIHDIRFSPDSRYLAVGSSENSVDFYDLTLGPTLNRISYCKDIPSFVIQMDFSADSSYLQVSSGCYKRHVYEVPSGKHLMDHAAIDRITWATWTSILGDEVLGIWSRHAEKADVNCACVSHSGISLVTGDDFGMVKLFDFPCPEKFAKHKRFLGHSPHVTNIRFTSGDRHVVSAGGDDCSLFVWKCVHTPH.

10 WD repeats span residues 59 to 100, 104 to 145, 148 to 187, 195 to 233, 235 to 273, 280 to 321, 323 to 362, 406 to 445, 449 to 488, and 561 to 601; these read GHSD…TISV, VHTH…MLSM, GHTD…LTPK, GDLQ…RTIQ, AHAA…TVID, GYKG…LIMQ, HCEG…LIAR, DRKE…KKVG, GSLS…EVTS, and GHSA…KLKD. The segment at 609-633 is disordered; that stretch reads ESLADSHSDESDSDLSDVPELDSEI. The span at 619-633 shows a compositional bias: acidic residues; sequence SDSDLSDVPELDSEI. WD repeat units follow at residues 725–766, 770–811, 814–853, 861–900, 901–940, 996–1035, 1038–1077, 1080–1120, and 1236–1276; these read GHDD…PLSI, HHQY…KLSI, GSKD…LIGR, GKND…KTVK, AHDG…KTYA, HMEG…CMLA, KLKK…DLVS, HRKD…RVGI, and AHST…YREK. Disordered stretches follow at residues 1274–1297 and 1326–1355; these read REKR…YDSD and QQKE…NVGK. Residues 1281–1294 show a composition bias toward acidic residues; that stretch reads SEESDIDSEEDGGY. A compositionally biased stretch (basic and acidic residues) spans 1326-1337; it reads QQKEPSIDERPP. 10 WD repeats span residues 1412–1463, 1467–1508, 1511–1550, 1560–1598, 1600–1646, 1691–1731, 1733–1774, 1775–1814, 1887–1926, and 1932–1969; these read EHND…TLSI, YHSK…KIAS, GHNQ…LLSK, ARMQ…RIVA, AHNG…RAFR, GHVD…MLNK, NLGH…GKKR, DRRC…TLNR, AEKA…KFAK, and GHSP…HTPH.

Belongs to the WD repeat EMAP family.

Its subcellular location is the cytoplasm. It localises to the cytoskeleton. Its function is as follows. May modify the assembly dynamics of microtubules, such that microtubules are slightly longer, but more dynamic. The sequence is that of Echinoderm microtubule-associated protein-like 5 (EML5) from Homo sapiens (Human).